The following is a 190-amino-acid chain: dITP/XTP pyrophosphatase (190 aa).

7-12 (SNNKNK) contacts substrate. Asp-68 serves as the catalytic Proton acceptor. Residue Asp-68 participates in Mg(2+) binding. Residues Thr-69, 148–151 (FGYD), Lys-171, and 176–177 (HR) contribute to the substrate site.

It belongs to the HAM1 NTPase family. In terms of assembly, homodimer. The cofactor is Mg(2+).

It carries out the reaction XTP + H2O = XMP + diphosphate + H(+). The enzyme catalyses dITP + H2O = dIMP + diphosphate + H(+). It catalyses the reaction ITP + H2O = IMP + diphosphate + H(+). Its function is as follows. Pyrophosphatase that catalyzes the hydrolysis of nucleoside triphosphates to their monophosphate derivatives, with a high preference for the non-canonical purine nucleotides XTP (xanthosine triphosphate), dITP (deoxyinosine triphosphate) and ITP. Seems to function as a house-cleaning enzyme that removes non-canonical purine nucleotides from the nucleotide pool, thus preventing their incorporation into DNA/RNA and avoiding chromosomal lesions. The sequence is that of dITP/XTP pyrophosphatase from Flavobacterium psychrophilum (strain ATCC 49511 / DSM 21280 / CIP 103535 / JIP02/86).